The chain runs to 723 residues: ATP-dependent zinc metalloprotease YME1 homolog (723 aa).

A helical membrane pass occupies residues 198 to 220 (LTRFYIFLVFCIFFGYLTGRIRV). An ATP-binding site is contributed by 288-295 (GPPGTGKT). His509 lines the Zn(2+) pocket. The active site involves Glu510. Positions 513 and 587 each coordinate Zn(2+).

This sequence in the N-terminal section; belongs to the AAA ATPase family. It in the C-terminal section; belongs to the peptidase M41 family. It depends on Zn(2+) as a cofactor.

It localises to the mitochondrion inner membrane. The protein localises to the mitochondrion. ATP-dependent metalloprotease that catalyzes the degradation of folded and unfolded proteins with a suitable degron sequence in the mitochondrial intermembrane region. Plays an important role in regulating mitochondrial morphology and function. The chain is ATP-dependent zinc metalloprotease YME1 homolog (ymel-1) from Caenorhabditis elegans.